The following is a 490-amino-acid chain: Protein nucleotidyltransferase YdiU (490 aa).

Residues glycine 89, glycine 91, arginine 92, lysine 112, aspartate 124, glycine 125, arginine 175, and arginine 182 each contribute to the ATP site. Residue aspartate 251 is the Proton acceptor of the active site. Mg(2+) contacts are provided by asparagine 252 and aspartate 261. Aspartate 261 lines the ATP pocket.

It belongs to the SELO family. It depends on Mg(2+) as a cofactor. The cofactor is Mn(2+).

The enzyme catalyses L-seryl-[protein] + ATP = 3-O-(5'-adenylyl)-L-seryl-[protein] + diphosphate. It carries out the reaction L-threonyl-[protein] + ATP = 3-O-(5'-adenylyl)-L-threonyl-[protein] + diphosphate. It catalyses the reaction L-tyrosyl-[protein] + ATP = O-(5'-adenylyl)-L-tyrosyl-[protein] + diphosphate. The catalysed reaction is L-histidyl-[protein] + UTP = N(tele)-(5'-uridylyl)-L-histidyl-[protein] + diphosphate. The enzyme catalyses L-seryl-[protein] + UTP = O-(5'-uridylyl)-L-seryl-[protein] + diphosphate. It carries out the reaction L-tyrosyl-[protein] + UTP = O-(5'-uridylyl)-L-tyrosyl-[protein] + diphosphate. Nucleotidyltransferase involved in the post-translational modification of proteins. It can catalyze the addition of adenosine monophosphate (AMP) or uridine monophosphate (UMP) to a protein, resulting in modifications known as AMPylation and UMPylation. The protein is Protein nucleotidyltransferase YdiU of Vibrio vulnificus (strain YJ016).